A 331-amino-acid polypeptide reads, in one-letter code: Ferredoxin--NADP reductase 2 (331 aa).

Residues Glu-37, Gln-45, Tyr-50, Val-90, Phe-124, Asp-286, and Thr-327 each coordinate FAD.

This sequence belongs to the ferredoxin--NADP reductase type 2 family. Homodimer. Requires FAD as cofactor.

It carries out the reaction 2 reduced [2Fe-2S]-[ferredoxin] + NADP(+) + H(+) = 2 oxidized [2Fe-2S]-[ferredoxin] + NADPH. The protein is Ferredoxin--NADP reductase 2 of Listeria monocytogenes serotype 4b (strain F2365).